Consider the following 255-residue polypeptide: 1-(5-phosphoribosyl)-5-[(5-phosphoribosylamino)methylideneamino] imidazole-4-carboxamide isomerase (255 aa).

D8 functions as the Proton acceptor in the catalytic mechanism. The active-site Proton donor is the D129.

Belongs to the HisA/HisF family.

The protein localises to the cytoplasm. It catalyses the reaction 1-(5-phospho-beta-D-ribosyl)-5-[(5-phospho-beta-D-ribosylamino)methylideneamino]imidazole-4-carboxamide = 5-[(5-phospho-1-deoxy-D-ribulos-1-ylimino)methylamino]-1-(5-phospho-beta-D-ribosyl)imidazole-4-carboxamide. It participates in amino-acid biosynthesis; L-histidine biosynthesis; L-histidine from 5-phospho-alpha-D-ribose 1-diphosphate: step 4/9. This Parasynechococcus marenigrum (strain WH8102) protein is 1-(5-phosphoribosyl)-5-[(5-phosphoribosylamino)methylideneamino] imidazole-4-carboxamide isomerase.